Consider the following 102-residue polypeptide: Ferredoxin (102 aa).

4Fe-4S ferredoxin-type domains follow at residues V45–E73 and T74–K102. Positions 54, 57, 60, 64, 83, 86, 89, and 93 each coordinate [4Fe-4S] cluster.

Requires [4Fe-4S] cluster as cofactor.

It functions in the pathway membrane lipid metabolism; glycerophospholipid metabolism. In terms of biological role, ferredoxin that is the specific electron donor for the geranylgeranyl reductase GGR involved in the biosynthesis of archaeal membrane lipids. This chain is Ferredoxin, found in Methanosarcina acetivorans (strain ATCC 35395 / DSM 2834 / JCM 12185 / C2A).